Here is a 62-residue protein sequence, read N- to C-terminus: Potassium channel toxin alpha-KTx 10.1 (62 aa).

The first 22 residues, 1 to 22, serve as a signal peptide directing secretion; the sequence is MEGIAKITLILLFLFVTMHTFA. The propeptide occupies 23 to 28; the sequence is NWNTEA. Cystine bridges form between Cys-31–Cys-50, Cys-36–Cys-55, and Cys-40–Cys-57. Residue Tyr-60 is modified to Tyrosine amide.

This sequence belongs to the short scorpion toxin superfamily. Potassium channel inhibitor family. Alpha-KTx 10 subfamily. Expressed by the venom gland.

It is found in the secreted. Functionally, blocks Shaker B (Sh) and voltage-gated potassium-channels Kv1.1/KCNA1, Kv1.2/KCNA2, Kv1.3/KCNA3. Also inhibits small conductance calcium-activated potassium channels (KCNN) and intermediate conductance calcium-activated potassium channel (KCa3.1/KCNN4). The polypeptide is Potassium channel toxin alpha-KTx 10.1 (Centruroides noxius (Mexican scorpion)).